The primary structure comprises 374 residues: N-acetyldiaminopimelate deacetylase (374 aa).

D68 is an active-site residue. E127 serves as the catalytic Proton acceptor.

The protein belongs to the peptidase M20A family. N-acetyldiaminopimelate deacetylase subfamily.

It carries out the reaction N-acetyl-(2S,6S)-2,6-diaminopimelate + H2O = (2S,6S)-2,6-diaminopimelate + acetate. It functions in the pathway amino-acid biosynthesis; L-lysine biosynthesis via DAP pathway; LL-2,6-diaminopimelate from (S)-tetrahydrodipicolinate (acetylase route): step 3/3. Functionally, catalyzes the conversion of N-acetyl-diaminopimelate to diaminopimelate and acetate. This Shouchella clausii (strain KSM-K16) (Alkalihalobacillus clausii) protein is N-acetyldiaminopimelate deacetylase.